We begin with the raw amino-acid sequence, 367 residues long: Cytochrome P450 119 (367 aa).

Residues histidine 76, arginine 80, threonine 257, arginine 259, histidine 315, and cysteine 317 each coordinate heme.

Belongs to the cytochrome P450 family. Requires heme as cofactor.

Its subcellular location is the cytoplasm. This chain is Cytochrome P450 119 (cyp119), found in Sulfurisphaera tokodaii (strain DSM 16993 / JCM 10545 / NBRC 100140 / 7) (Sulfolobus tokodaii).